A 989-amino-acid polypeptide reads, in one-letter code: DNA-binding protein SMUBP-2 (989 aa).

At alanine 2 the chain carries N-acetylalanine. ATP-binding positions include 213-220 (GPPGTGKT), glutamine 402, tyrosine 441, and glutamate 570. An SS DNA-binding region spans residues 637-783 (TAFEYLDDIV…KARHITVSRK (147 aa)). 3 disordered regions span residues 650–717 (YTHE…GCDR), 765–818 (LRHD…GQPH), and 833–869 (LQRQ…TKGP). Over residues 677-690 (EQENGQEARAAAGQ) the composition is skewed to low complexity. The R3H domain occupies 721-784 (IDRTEHFRAM…ARHITVSRKS (64 aa)). A compositionally biased stretch (basic and acidic residues) spans 765 to 775 (LRHDSTGEGKA). Phosphoserine occurs at positions 797 and 800. Residues 833 to 842 (LQRQQGSQAQ) show a composition bias toward low complexity. A Nuclear localization signal motif is present at residues 860 to 864 (KKKKK). The segment at 885–934 (IKADNTCSFAKCTASTTTLGQFCMHCSRRYCLSHHLPEIHGCGEKARAHA) adopts an AN1-type zinc-finger fold. Positions 891, 896, 907, 910, 915, 918, 924, and 926 each coordinate Zn(2+). Positions 954-972 (ALDPAKRAQLQRRLDKKLG) are enriched in basic and acidic residues. The tract at residues 954–989 (ALDPAKRAQLQRRLDKKLGELSSQRTSKRKEKERGT) is disordered.

Belongs to the DNA2/NAM7 helicase family. As to quaternary structure, homooligomer. Interacts with RUVBL1. Interacts with RUVBL2. Interacts with GTF3C1. Interacts with ABT1. Interacts with ribosomes. As to expression, high expression in brain and testis, moderate in heart, spleen, and kidney, and low in other tissues.

It is found in the nucleus. The protein localises to the cytoplasm. It localises to the cell projection. Its subcellular location is the axon. It catalyses the reaction ATP + H2O = ADP + phosphate + H(+). Functionally, 5' to 3' helicase that unwinds RNA and DNA duplexes in an ATP-dependent reaction. Specific to 5'-phosphorylated single-stranded guanine-rich sequences. May play a role in RNA metabolism, ribosome biogenesis or initiation of translation. May play a role in regulation of transcription. Interacts with tRNA-Tyr. The chain is DNA-binding protein SMUBP-2 (IGHMBP2) from Mesocricetus auratus (Golden hamster).